The following is a 167-amino-acid chain: Small ribosomal subunit protein uS3m (167 aa).

The N-terminal 35 residues, 1-35, are a transit peptide targeting the mitochondrion; sequence MVALYCGGGLRPLMLSWSRDLPCIWRALHTSAVCF.

The protein belongs to the universal ribosomal protein uS3 family. In terms of assembly, component of the mitochondrial ribosome small subunit (28S) which comprises a 12S rRNA and about 30 distinct proteins.

The protein resides in the mitochondrion. The protein is Small ribosomal subunit protein uS3m (MRPS24) of Bos taurus (Bovine).